A 68-amino-acid chain; its full sequence is MSGFSSVAATKKVVQQLQLEAGLNSVKVSQAAADLKQFCLQNAQHDPLLTGVSSSTNPFRPQKVCSFL.

The G protein gamma domain maps to 3–68 (GFSSVAATKK…FRPQKVCSFL (66 aa)). Cysteine methyl ester is present on cysteine 65. Cysteine 65 carries S-geranylgeranyl cysteine lipidation. A propeptide spans 66–68 (SFL) (removed in mature form).

The protein belongs to the G protein gamma family. As to quaternary structure, g proteins are composed of 3 units; alpha, beta and gamma.

It is found in the cell membrane. In terms of biological role, guanine nucleotide-binding proteins (G proteins) are involved as a modulator or transducer in various transmembrane signaling systems. The beta and gamma chains are required for the GTPase activity, for replacement of GDP by GTP, and for G protein-effector interaction. The polypeptide is Guanine nucleotide-binding protein G(I)/G(S)/G(O) subunit gamma-5B (Homo sapiens (Human)).